We begin with the raw amino-acid sequence, 513 residues long: ATP synthase subunit alpha (513 aa).

Residue 169–176 coordinates ATP; it reads GDRQTGKT.

This sequence belongs to the ATPase alpha/beta chains family. As to quaternary structure, F-type ATPases have 2 components, CF(1) - the catalytic core - and CF(0) - the membrane proton channel. CF(1) has five subunits: alpha(3), beta(3), gamma(1), delta(1), epsilon(1). CF(0) has three main subunits: a(1), b(2) and c(9-12). The alpha and beta chains form an alternating ring which encloses part of the gamma chain. CF(1) is attached to CF(0) by a central stalk formed by the gamma and epsilon chains, while a peripheral stalk is formed by the delta and b chains.

Its subcellular location is the cell inner membrane. It catalyses the reaction ATP + H2O + 4 H(+)(in) = ADP + phosphate + 5 H(+)(out). Its function is as follows. Produces ATP from ADP in the presence of a proton gradient across the membrane. The alpha chain is a regulatory subunit. The sequence is that of ATP synthase subunit alpha from Pseudoalteromonas translucida (strain TAC 125).